Consider the following 54-residue polypeptide: MARNEIRPIVKLRSTAGTGYTYVTRKNRRNDPDRMVLRKYDPVVRKHVDFREER.

It belongs to the bacterial ribosomal protein bL33 family.

This Mycobacteroides abscessus (strain ATCC 19977 / DSM 44196 / CCUG 20993 / CIP 104536 / JCM 13569 / NCTC 13031 / TMC 1543 / L948) (Mycobacterium abscessus) protein is Large ribosomal subunit protein bL33A.